The following is a 338-amino-acid chain: Anthranilate phosphoribosyltransferase (338 aa).

Residues Gly-83, 86 to 87, Ser-91, 93 to 96, 111 to 119, and Ala-123 each bind 5-phospho-alpha-D-ribose 1-diphosphate; these read GD, NCST, and KHGNRAVSS. Gly-83 is a binding site for anthranilate. Ser-95 provides a ligand contact to Mg(2+). Position 114 (Asn-114) interacts with anthranilate. Arg-169 contacts anthranilate. Asp-228 and Glu-229 together coordinate Mg(2+).

Belongs to the anthranilate phosphoribosyltransferase family. Homodimer. The cofactor is Mg(2+).

It carries out the reaction N-(5-phospho-beta-D-ribosyl)anthranilate + diphosphate = 5-phospho-alpha-D-ribose 1-diphosphate + anthranilate. Its pathway is amino-acid biosynthesis; L-tryptophan biosynthesis; L-tryptophan from chorismate: step 2/5. Its function is as follows. Catalyzes the transfer of the phosphoribosyl group of 5-phosphorylribose-1-pyrophosphate (PRPP) to anthranilate to yield N-(5'-phosphoribosyl)-anthranilate (PRA). The protein is Anthranilate phosphoribosyltransferase of Nitratidesulfovibrio vulgaris (strain DSM 19637 / Miyazaki F) (Desulfovibrio vulgaris).